We begin with the raw amino-acid sequence, 112 residues long: Truncated ankyrin repeat protein B25 (112 aa).

The protein belongs to the orthopoxviruses B25 protein family.

The protein is Truncated ankyrin repeat protein B25 of Bos taurus (Bovine).